A 430-amino-acid chain; its full sequence is T-kininogen 1 (430 aa).

A signal peptide spans 1–18 (MKLITILLLCSRLLPSLA). Position 19 is a pyrrolidone carboxylic acid (glutamine 19). The Cystatin kininogen-type 1 domain occupies 28-131 (CNDETVFQAV…TQICNITPGK (104 aa)). 9 disulfides stabilise this stretch: cysteine 28–cysteine 404, cysteine 83–cysteine 94, cysteine 107–cysteine 125, cysteine 141–cysteine 144, cysteine 205–cysteine 217, cysteine 228–cysteine 247, cysteine 263–cysteine 266, cysteine 327–cysteine 339, and cysteine 350–cysteine 369. An N-linked (GlcNAc...) asparagine glycan is attached at asparagine 82. The Cystatin kininogen-type 2 domain occupies 150–253 (MDSSDLKPVL…SQSCDLYPGD (104 aa)). N-linked (GlcNAc...) asparagine glycans are attached at residues asparagine 168 and asparagine 204. A Cystatin kininogen-type 3 domain is found at 272–375 (VDSPELKEAL…TVRCQALDMM (104 aa)). Residue asparagine 326 is glycosylated (N-linked (GlcNAc...) asparagine). Positions 411–430 (SKARAGPAPDHQAEASTVTP) are disordered.

In terms of processing, as T-kinin is preceded by a Met instead of an Arg or Lys, it is not released from its precursor by either tissue or plasma kallikrein. In terms of tissue distribution, plasma.

Its subcellular location is the secreted. The protein localises to the extracellular space. In terms of biological role, kininogens are plasma glycoproteins with a number of functions: (1) as precursor of the active peptide bradykinin they effect smooth muscle contraction, induction of hypotension and increase of vascular permeability. (2) They play a role in blood coagulation by helping to position optimally prekallikrein and factor XI next to factor XII. (3) They are inhibitor of thiol proteases. This is T-kininogen 1 (Map1) from Rattus norvegicus (Rat).